A 245-amino-acid chain; its full sequence is Orotidine 5'-phosphate decarboxylase (245 aa).

Residues aspartate 22, lysine 44, 71–80, threonine 131, arginine 192, glutamine 201, glycine 221, and arginine 222 each bind substrate; that span reads DLKFHDIPNT. Residue lysine 73 is the Proton donor of the active site.

The protein belongs to the OMP decarboxylase family. Type 1 subfamily. As to quaternary structure, homodimer.

The enzyme catalyses orotidine 5'-phosphate + H(+) = UMP + CO2. It functions in the pathway pyrimidine metabolism; UMP biosynthesis via de novo pathway; UMP from orotate: step 2/2. Its function is as follows. Catalyzes the decarboxylation of orotidine 5'-monophosphate (OMP) to uridine 5'-monophosphate (UMP). The sequence is that of Orotidine 5'-phosphate decarboxylase from Yersinia pseudotuberculosis serotype O:1b (strain IP 31758).